The sequence spans 105 residues: Large ribosomal subunit protein uL24 (105 aa).

This sequence belongs to the universal ribosomal protein uL24 family. As to quaternary structure, part of the 50S ribosomal subunit.

One of two assembly initiator proteins, it binds directly to the 5'-end of the 23S rRNA, where it nucleates assembly of the 50S subunit. Its function is as follows. One of the proteins that surrounds the polypeptide exit tunnel on the outside of the subunit. The chain is Large ribosomal subunit protein uL24 from Chromohalobacter salexigens (strain ATCC BAA-138 / DSM 3043 / CIP 106854 / NCIMB 13768 / 1H11).